The chain runs to 620 residues: 1-deoxy-D-xylulose-5-phosphate synthase (620 aa).

Thiamine diphosphate is bound by residues histidine 80 and 121 to 123; that span reads GHS. A Mg(2+)-binding site is contributed by aspartate 152. Residues 153 to 154, asparagine 181, tyrosine 288, and glutamate 370 each bind thiamine diphosphate; that span reads GA. Asparagine 181 is a binding site for Mg(2+).

The protein belongs to the transketolase family. DXPS subfamily. In terms of assembly, homodimer. Mg(2+) is required as a cofactor. The cofactor is thiamine diphosphate.

It carries out the reaction D-glyceraldehyde 3-phosphate + pyruvate + H(+) = 1-deoxy-D-xylulose 5-phosphate + CO2. It functions in the pathway metabolic intermediate biosynthesis; 1-deoxy-D-xylulose 5-phosphate biosynthesis; 1-deoxy-D-xylulose 5-phosphate from D-glyceraldehyde 3-phosphate and pyruvate: step 1/1. Catalyzes the acyloin condensation reaction between C atoms 2 and 3 of pyruvate and glyceraldehyde 3-phosphate to yield 1-deoxy-D-xylulose-5-phosphate (DXP). The polypeptide is 1-deoxy-D-xylulose-5-phosphate synthase (Escherichia coli O127:H6 (strain E2348/69 / EPEC)).